Reading from the N-terminus, the 41-residue chain is MKNTVKLEQFVALKEKDLQKIKGGEMRLSKFFRDFILQRKK.

Positions 1-24 (MKNTVKLEQFVALKEKDLQKIKGG) are excised as a propeptide.

It belongs to the ComC family.

The protein localises to the secreted. Functionally, acts as a pheromone, induces cells to develop competence for genetic transformation. This is Competence-stimulating peptide type 1 (comC1) from Streptococcus pneumoniae.